The following is a 125-amino-acid chain: Small ribosomal subunit protein uS11 (125 aa).

Belongs to the universal ribosomal protein uS11 family. Part of the 30S ribosomal subunit. Interacts with proteins S7 and S18. Binds to IF-3.

Its function is as follows. Located on the platform of the 30S subunit, it bridges several disparate RNA helices of the 16S rRNA. Forms part of the Shine-Dalgarno cleft in the 70S ribosome. The polypeptide is Small ribosomal subunit protein uS11 (Aquifex aeolicus (strain VF5)).